The following is a 90-amino-acid chain: DNA-binding protein HU-1 (90 aa).

At Thr-4 the chain carries Phosphothreonine. Residues 55-90 (RSARKGRNPQTGEEIEIPATKNPAFKPGKQLKDAVN) form a disordered region.

Belongs to the bacterial histone-like protein family. Homodimer.

In terms of biological role, histone-like DNA-binding protein which is capable of wrapping DNA to stabilize it, and thus to prevent its denaturation under extreme environmental conditions. This is DNA-binding protein HU-1 (hup1) from Halalkalibacterium halodurans (strain ATCC BAA-125 / DSM 18197 / FERM 7344 / JCM 9153 / C-125) (Bacillus halodurans).